We begin with the raw amino-acid sequence, 180 residues long: Signaling threshold-regulating transmembrane adapter 1 (180 aa).

The Extracellular portion of the chain corresponds to 1–24 (MSRDYNCTTDDQLAWGIPSISHAW). The N-linked (GlcNAc...) asparagine glycan is linked to asparagine 6. The chain crosses the membrane as a helical; Signal-anchor for type III membrane protein span at residues 25–45 (GLWALLGVVTVLLLISLAALL). The Cytoplasmic portion of the chain corresponds to 46–180 (SQWTRGRRRN…AYANSQPAPS (135 aa)). Phosphoserine is present on residues serine 63 and serine 66. The residue at position 73 (tyrosine 73) is a Phosphotyrosine. The interval 73 to 76 (YGNL) is interaction with GRB2. Residues 81–103 (TGRLSQEPRSEEQDPPSSGGLAR) form a disordered region. A phosphoserine mark is found at serine 85 and serine 90. A phosphotyrosine mark is found at tyrosine 111, tyrosine 132, and tyrosine 153. Positions 130–135 (IKYCEV) are interaction with PTPN11. Positions 153–156 (YASV) are interaction with CSK. Serine 166 is subject to Phosphoserine. Tyrosine 172 carries the phosphotyrosine modification. Residues 172-175 (YANS) are interaction with GRB2.

As to quaternary structure, homodimer; disulfide-linked. When phosphorylated, interacts with PTPN11/SHP2, GRB2 and CSK. In terms of processing, phosphorylated on tyrosines upon TCR activation; which leads to the recruitment of PTPN11, GRB2 and CSK. Expressed in thymus and spleen, with highest levels in immature thymocytes (at protein level).

It is found in the cell membrane. In terms of biological role, negatively regulates T-cell antigen receptor (TCR)-mediated signaling. Involved in positive selection of T-cells. This Mus musculus (Mouse) protein is Signaling threshold-regulating transmembrane adapter 1 (Sit1).